Here is a 185-residue protein sequence, read N- to C-terminus: Ribosome-recycling factor (185 aa).

This sequence belongs to the RRF family.

It is found in the cytoplasm. Functionally, responsible for the release of ribosomes from messenger RNA at the termination of protein biosynthesis. May increase the efficiency of translation by recycling ribosomes from one round of translation to another. This chain is Ribosome-recycling factor, found in Clostridium perfringens (strain ATCC 13124 / DSM 756 / JCM 1290 / NCIMB 6125 / NCTC 8237 / Type A).